A 458-amino-acid chain; its full sequence is Elongation factor 1-alpha (458 aa).

Gly2 is subject to N,N,N-trimethylglycine. An N6,N6-dimethyllysine; alternate modification is found at Lys3. The residue at position 3 (Lys3) is an N6-methyllysine; alternate. Residues 5–240 enclose the tr-type G domain; the sequence is KTHVNVVVIG…DAIEPPVRPS (236 aa). The G1 stretch occupies residues 14 to 21; it reads GHVDSGKS. 14-21 serves as a coordination point for GTP; sequence GHVDSGKS. Lys30 is subject to N6-methyllysine. The tract at residues 70–74 is G2; that stretch reads GITID. At Lys79 the chain carries N6,N6,N6-trimethyllysine. A G3 region spans residues 91–94; sequence DAPG. GTP contacts are provided by residues 91 to 95 and 153 to 156; these read DAPGH and NKMD. Positions 153-156 are G4; sequence NKMD. The interval 192–194 is G5; that stretch reads SGW. Residue Lys316 is modified to N6,N6-dimethyllysine; alternate. Lys316 carries the N6-methyllysine; alternate modification. Lys390 carries the post-translational modification N6-methyllysine.

This sequence belongs to the TRAFAC class translation factor GTPase superfamily. Classic translation factor GTPase family. EF-Tu/EF-1A subfamily.

The protein localises to the cytoplasm. This protein promotes the GTP-dependent binding of aminoacyl-tRNA to the A-site of ribosomes during protein biosynthesis. In Mucor circinelloides f. lusitanicus (Mucor racemosus var. lusitanicus), this protein is Elongation factor 1-alpha (TEF-2).